We begin with the raw amino-acid sequence, 134 residues long: Profilin-3 (134 aa).

Cys-13 and Cys-118 are oxidised to a cystine. Residues 84–100 (AVIRGKKGSGGITIKKT) carry the Involved in PIP2 interaction motif. Thr-114 bears the Phosphothreonine mark.

Belongs to the profilin family. As to quaternary structure, occurs in many kinds of cells as a complex with monomeric actin in a 1:1 ratio. In terms of processing, phosphorylated by MAP kinases.

Its subcellular location is the cytoplasm. The protein localises to the cytoskeleton. Functionally, binds to actin and affects the structure of the cytoskeleton. At high concentrations, profilin prevents the polymerization of actin, whereas it enhances it at low concentrations. This is Profilin-3 from Olea europaea (Common olive).